A 406-amino-acid polypeptide reads, in one-letter code: DAZ-associated protein 1 (406 aa).

An N-acetylmethionine modification is found at M1. RRM domains follow at residues 10-97 (GKLF…RTRP) and 113-190 (NKIF…RAEP). The disordered stretch occupies residues 74-117 (TLDGRNIDPKPCTPRGMQPERTRPKEGWQKGPRSDSSKSNKIFV). The segment covering 91–111 (QPERTRPKEGWQKGPRSDSSK) has biased composition (basic and acidic residues). K150 carries the post-translational modification N6-acetyllysine. The segment at 186–406 (KRAEPRDSKN…NVQGFHPYRR (221 aa)) is disordered. Residues 195 to 207 (NQAPGQPGASQWG) are compositionally biased toward polar residues. Positions 247-262 (GPPPAGRGAPPPPPPF) are enriched in pro residues. R253 is modified (omega-N-methylarginine). Residues 280–294 (FPQGYGAPPQFSFGY) show a composition bias toward low complexity. The segment covering 295–315 (GPPPPPPDQFAPPGVPPPPAT) has biased composition (pro residues). A compositionally biased stretch (low complexity) spans 363-378 (SDPSQQPPSYGGPSVP). The segment covering 379–392 (GSGGPPAGGSGFGR) has biased composition (gly residues).

In terms of assembly, interacts with DAZ and DAZL. Acetylation at Lys-150 is predominantly observed in the nuclear fraction, and may regulate nucleocytoplasmic transport. As to expression, mainly expressed in testis. Expressed at much lower level in liver, heart and brain. Also expressed in ovary. Expressed throughout testes development, in both the prenatal and postnatal periods.

It is found in the cytoplasm. The protein resides in the nucleus. Functionally, RNA-binding protein, which may be required during spermatogenesis. The sequence is that of DAZ-associated protein 1 (Dazap1) from Mus musculus (Mouse).